We begin with the raw amino-acid sequence, 45 residues long: Rubredoxin-1 (45 aa).

M1 is modified (N-formylmethionine). Positions 1–45 (MQKYVCNVCGYEYDPAEHDNVPFDQLPDDWCCPVCGVSKDQFSPA) constitute a Rubredoxin-like domain. The Fe cation site is built by C6, C9, C32, and C35.

The protein belongs to the rubredoxin family. The cofactor is Fe(3+).

It localises to the cytoplasm. Its function is as follows. Rubredoxin is a small nonheme, iron protein lacking acid-labile sulfide. Its single Fe, chelated to 4 Cys, functions as an electron acceptor and may also stabilize the conformation of the molecule. Electron acceptor for cytoplasmic lactate dehydrogenase. The sequence is that of Rubredoxin-1 (rd1) from Desulfovibrio desulfuricans (strain ATCC 27774 / DSM 6949 / MB).